We begin with the raw amino-acid sequence, 318 residues long: Putative S-adenosyl-L-methionine-dependent methyltransferase MMAR_1595 (318 aa).

S-adenosyl-L-methionine contacts are provided by residues glutamate 132 and 161 to 162 (DL).

The protein belongs to the UPF0677 family.

Exhibits S-adenosyl-L-methionine-dependent methyltransferase activity. In Mycobacterium marinum (strain ATCC BAA-535 / M), this protein is Putative S-adenosyl-L-methionine-dependent methyltransferase MMAR_1595.